The chain runs to 342 residues: 4-hydroxy-3-methylbut-2-enyl diphosphate reductase (342 aa).

Residue Cys-47 participates in [4Fe-4S] cluster binding. Residues His-78 and His-111 each contribute to the (2E)-4-hydroxy-3-methylbut-2-enyl diphosphate site. Dimethylallyl diphosphate is bound by residues His-78 and His-111. Residues His-78 and His-111 each coordinate isopentenyl diphosphate. Cys-133 is a [4Fe-4S] cluster binding site. His-161 lines the (2E)-4-hydroxy-3-methylbut-2-enyl diphosphate pocket. His-161 is a binding site for dimethylallyl diphosphate. His-161 is an isopentenyl diphosphate binding site. The active-site Proton donor is the Glu-163. A (2E)-4-hydroxy-3-methylbut-2-enyl diphosphate-binding site is contributed by Thr-201. [4Fe-4S] cluster is bound at residue Cys-231. The (2E)-4-hydroxy-3-methylbut-2-enyl diphosphate site is built by Ser-259, Ser-260, Asn-261, and Ser-303. Dimethylallyl diphosphate is bound by residues Ser-259, Ser-260, Asn-261, and Ser-303. Ser-259, Ser-260, Asn-261, and Ser-303 together coordinate isopentenyl diphosphate.

Belongs to the IspH family. It depends on [4Fe-4S] cluster as a cofactor.

It carries out the reaction isopentenyl diphosphate + 2 oxidized [2Fe-2S]-[ferredoxin] + H2O = (2E)-4-hydroxy-3-methylbut-2-enyl diphosphate + 2 reduced [2Fe-2S]-[ferredoxin] + 2 H(+). The enzyme catalyses dimethylallyl diphosphate + 2 oxidized [2Fe-2S]-[ferredoxin] + H2O = (2E)-4-hydroxy-3-methylbut-2-enyl diphosphate + 2 reduced [2Fe-2S]-[ferredoxin] + 2 H(+). Its pathway is isoprenoid biosynthesis; dimethylallyl diphosphate biosynthesis; dimethylallyl diphosphate from (2E)-4-hydroxy-3-methylbutenyl diphosphate: step 1/1. The protein operates within isoprenoid biosynthesis; isopentenyl diphosphate biosynthesis via DXP pathway; isopentenyl diphosphate from 1-deoxy-D-xylulose 5-phosphate: step 6/6. Functionally, catalyzes the conversion of 1-hydroxy-2-methyl-2-(E)-butenyl 4-diphosphate (HMBPP) into a mixture of isopentenyl diphosphate (IPP) and dimethylallyl diphosphate (DMAPP). Acts in the terminal step of the DOXP/MEP pathway for isoprenoid precursor biosynthesis. This Anaplasma marginale (strain Florida) protein is 4-hydroxy-3-methylbut-2-enyl diphosphate reductase.